We begin with the raw amino-acid sequence, 170 residues long: MKIENYIRDIQGFPKEGILFKDITPLLNNVEARQECLSILVNSLKGQKIDKVVGAESRGFFFGMLLAQELKAGFIPVRKPKKLPFDIISASYELEYGTDSLEMHIDAIKKGDRVLIHDDVLATGGTAKAVCELVEKLGGEIVQCNFLMELTFLNGRKKIKEYPVFAALTY.

This sequence belongs to the purine/pyrimidine phosphoribosyltransferase family. Homodimer.

The protein localises to the cytoplasm. It catalyses the reaction AMP + diphosphate = 5-phospho-alpha-D-ribose 1-diphosphate + adenine. It participates in purine metabolism; AMP biosynthesis via salvage pathway; AMP from adenine: step 1/1. In terms of biological role, catalyzes a salvage reaction resulting in the formation of AMP, that is energically less costly than de novo synthesis. The protein is Adenine phosphoribosyltransferase of Flavobacterium johnsoniae (strain ATCC 17061 / DSM 2064 / JCM 8514 / BCRC 14874 / CCUG 350202 / NBRC 14942 / NCIMB 11054 / UW101) (Cytophaga johnsonae).